We begin with the raw amino-acid sequence, 218 residues long: N-(5'-phosphoribosyl)anthranilate isomerase (218 aa).

The protein belongs to the TrpF family.

The enzyme catalyses N-(5-phospho-beta-D-ribosyl)anthranilate = 1-(2-carboxyphenylamino)-1-deoxy-D-ribulose 5-phosphate. The protein operates within amino-acid biosynthesis; L-tryptophan biosynthesis; L-tryptophan from chorismate: step 3/5. This Rhodopseudomonas palustris (strain HaA2) protein is N-(5'-phosphoribosyl)anthranilate isomerase.